The following is a 152-amino-acid chain: UPF0225 protein KPK_2103 (152 aa).

This sequence belongs to the UPF0225 family.

This Klebsiella pneumoniae (strain 342) protein is UPF0225 protein KPK_2103.